Consider the following 131-residue polypeptide: Small ribosomal subunit protein bS6 (131 aa).

The interval 96–131 (VTEASPMAKAKDERDSRRGPAGDRSYDEANAEEIAE) is disordered. A compositionally biased stretch (basic and acidic residues) spans 104–122 (KAKDERDSRRGPAGDRSYD).

The protein belongs to the bacterial ribosomal protein bS6 family.

Its function is as follows. Binds together with bS18 to 16S ribosomal RNA. The sequence is that of Small ribosomal subunit protein bS6 from Shewanella sp. (strain MR-4).